Consider the following 422-residue polypeptide: Glutamyl-tRNA reductase (422 aa).

Substrate is bound by residues 48–51, serine 100, 105–107, and glutamine 111; these read TCNR and EDQ. The active-site Nucleophile is cysteine 49. 180–185 is an NADP(+) binding site; sequence GTGEMG.

Belongs to the glutamyl-tRNA reductase family. In terms of assembly, homodimer.

The enzyme catalyses (S)-4-amino-5-oxopentanoate + tRNA(Glu) + NADP(+) = L-glutamyl-tRNA(Glu) + NADPH + H(+). It participates in porphyrin-containing compound metabolism; protoporphyrin-IX biosynthesis; 5-aminolevulinate from L-glutamyl-tRNA(Glu): step 1/2. Functionally, catalyzes the NADPH-dependent reduction of glutamyl-tRNA(Glu) to glutamate 1-semialdehyde (GSA). This chain is Glutamyl-tRNA reductase, found in Methanococcoides burtonii (strain DSM 6242 / NBRC 107633 / OCM 468 / ACE-M).